A 376-amino-acid chain; its full sequence is c-di-GMP synthase (376 aa).

Belongs to the CD-NTase family. G05 subfamily.

The enzyme catalyses 2 GTP = 3',3'-c-di-GMP + 2 diphosphate. Cyclic nucleotide synthase (second messenger synthase) of a CBASS antivirus system. CBASS (cyclic oligonucleotide-based antiphage signaling system) provides immunity against bacteriophage. The CD-NTase protein synthesizes cyclic nucleotides in response to infection; these serve as specific second messenger signals. The signals activate a diverse range of effectors, leading to bacterial cell death and thus abortive phage infection. A type I-D CBASS(GG) system. Its function is as follows. Cyclic dinucleotide synthase that catalyzes the synthesis of c-di-GMP, has no activity with other NTP substrates. The protein is c-di-GMP synthase of Roseivirga ehrenbergii (strain DSM 102268 / JCM 13514 / KCTC 12282 / NCIMB 14502 / KMM 6017).